The sequence spans 471 residues: Ribulose bisphosphate carboxylase large chain (471 aa).

Substrate-binding residues include N115 and T165. K167 (proton acceptor) is an active-site residue. K169 contributes to the substrate binding site. Mg(2+)-binding residues include K193, D195, and E196. Residue K193 is modified to N6-carboxylysine. H286 serves as the catalytic Proton acceptor. Residues R287, H319, and S371 each coordinate substrate.

It belongs to the RuBisCO large chain family. Type I subfamily. As to quaternary structure, heterohexadecamer of 8 large chains and 8 small chains. Forms a CsoS2-CsoS1-RuBisCO complex. It depends on Mg(2+) as a cofactor.

It localises to the carboxysome. It carries out the reaction 2 (2R)-3-phosphoglycerate + 2 H(+) = D-ribulose 1,5-bisphosphate + CO2 + H2O. The catalysed reaction is D-ribulose 1,5-bisphosphate + O2 = 2-phosphoglycolate + (2R)-3-phosphoglycerate + 2 H(+). In terms of biological role, ruBisCO catalyzes two reactions: the carboxylation of D-ribulose 1,5-bisphosphate, the primary event in carbon dioxide fixation, as well as the oxidative fragmentation of the pentose substrate in the photorespiration process. Both reactions occur simultaneously and in competition at the same active site. This chain is Ribulose bisphosphate carboxylase large chain, found in Parasynechococcus marenigrum (strain WH8102).